A 285-amino-acid polypeptide reads, in one-letter code: Bifunctional protein FolD (285 aa).

NADP(+) contacts are provided by residues 166-168 (GAS) and isoleucine 232.

This sequence belongs to the tetrahydrofolate dehydrogenase/cyclohydrolase family. Homodimer.

The catalysed reaction is (6R)-5,10-methylene-5,6,7,8-tetrahydrofolate + NADP(+) = (6R)-5,10-methenyltetrahydrofolate + NADPH. It carries out the reaction (6R)-5,10-methenyltetrahydrofolate + H2O = (6R)-10-formyltetrahydrofolate + H(+). It participates in one-carbon metabolism; tetrahydrofolate interconversion. Catalyzes the oxidation of 5,10-methylenetetrahydrofolate to 5,10-methenyltetrahydrofolate and then the hydrolysis of 5,10-methenyltetrahydrofolate to 10-formyltetrahydrofolate. The polypeptide is Bifunctional protein FolD (Psychromonas ingrahamii (strain DSM 17664 / CCUG 51855 / 37)).